A 522-amino-acid polypeptide reads, in one-letter code: Penicillin-sensitive carboxypeptidase A (522 aa).

Ser-94 (acyl-ester intermediate) is an active-site residue. Residue Lys-97 is the Proton acceptor of the active site. The active site involves Ser-351. Residue Lys-461 participates in substrate binding.

It belongs to the peptidase S13 family.

It catalyses the reaction Preferential cleavage: (Ac)2-L-Lys-D-Ala-|-D-Ala. Also transpeptidation of peptidyl-alanyl moieties that are N-acyl substituents of D-alanine.. Its activity is regulated as follows. Inhibited by penicillin G. Functionally, carboxypeptidase. The polypeptide is Penicillin-sensitive carboxypeptidase A (pscA) (Dictyostelium discoideum (Social amoeba)).